The chain runs to 622 residues: MLITRLRVPTIKRPLLPITSHLVRHCIRTYVATNHGNVRPFITPYKSSLPVRCLIAQRHIRTFPSNDKFTTKASNIETILLRKNNEREFKQSLLADAKNFQERFKINLKWILIKNNRPFSLNEISIIASWLILSQILWLILSTTTFISFYLFVINSVFSQEYIHEKKIYERLLKWLLKDHKCSNQDLEITFSPEDKASMLVLSPDWESNSILIKRLNVRDEILDLDLKFHHINLNVSLKNWLLGRGLITNVSIYGIRGCLNLSNFINLVNSFQGDQKTENFLKTLNNVEITDSEILLKQSLSAQETPSLKFSIYNLSLPRLRLNHFISDILSAKTFSGSINNSLFNLFKRQQKLTAVIENNNKNRMASSKFDFTDNNQENYRTVTHQDDPNYVTTLRLNFININDLKFNGNGKFNWLKDGQVEILADIMLTNSTSHLSSESKYAVVDLKVTCRDLKTTFPQEPPVLSTGDSIVSLDELKPIITFINSYEGMANPILKDFSENERLTNSIIWNSPNVSINRQRKSYPLTTKVTSNSTKEIIKFHNQPNTNANEIVLRCKMVKNLSDLQLININQILDQITMELYVDLTKIVEDWEFKNKNDWMKQWGTTFASQLLLFGFGAMV.

The transit peptide at 1–70 (MLITRLRVPT…RTFPSNDKFT (70 aa)) directs the protein to the mitochondrion. At 71 to 123 (TKASNIETILLRKNNEREFKQSLLADAKNFQERFKINLKWILIKNNRPFSLNE) the chain is on the mitochondrial matrix side. The helical transmembrane segment at 124 to 144 (ISIIASWLILSQILWLILSTT) threads the bilayer. Topologically, residues 145–601 (TFISFYLFVI…DWEFKNKNDW (457 aa)) are mitochondrial intermembrane. A helical transmembrane segment spans residues 602–622 (MKQWGTTFASQLLLFGFGAMV).

This sequence belongs to the MDM31/MDM32 family. As to quaternary structure, interacts with MDM31. Participates in a complex of about 175 kDa.

The protein localises to the mitochondrion inner membrane. Functionally, involved in the organization of the mitochondrial membranes and the global structure of the mitochondria. Also required for mitochondrial distribution and mobility as well as for the maintenance of mitochondrial DNA nucleoids structures. The chain is Mitochondrial distribution and morphology protein 32 (MDM32) from Saccharomyces cerevisiae (strain YJM789) (Baker's yeast).